The sequence spans 424 residues: Glutamate-1-semialdehyde 2,1-aminomutase (424 aa).

N6-(pyridoxal phosphate)lysine is present on K258.

This sequence belongs to the class-III pyridoxal-phosphate-dependent aminotransferase family. HemL subfamily. Pyridoxal 5'-phosphate is required as a cofactor.

The protein resides in the cytoplasm. It catalyses the reaction (S)-4-amino-5-oxopentanoate = 5-aminolevulinate. It participates in porphyrin-containing compound metabolism; protoporphyrin-IX biosynthesis; 5-aminolevulinate from L-glutamyl-tRNA(Glu): step 2/2. The sequence is that of Glutamate-1-semialdehyde 2,1-aminomutase from Pyrobaculum neutrophilum (strain DSM 2338 / JCM 9278 / NBRC 100436 / V24Sta) (Thermoproteus neutrophilus).